The chain runs to 390 residues: Glucose-fructose oxidoreductase domain-containing protein 1 (390 aa).

Residues 1–21 (MLPGVGVFGTSLTSRVIIPLL) form the signal peptide. Residues asparagine 161, asparagine 270, and asparagine 354 are each glycosylated (N-linked (GlcNAc...) asparagine).

Belongs to the Gfo/Idh/MocA family. As to quaternary structure, homodimer.

It is found in the secreted. In terms of biological role, probably catalytically inactive enzyme. Does not bind NAD or NADP. The protein is Glucose-fructose oxidoreductase domain-containing protein 1 (gfod1) of Xenopus tropicalis (Western clawed frog).